Here is a 169-residue protein sequence, read N- to C-terminus: Oleosin Ara h 10.0101 (169 aa).

2 helical membrane passes run 39–59 (VIAV…AGLA) and 73–93 (LFIL…LSVA). The span at 146–156 (KDVGQKTKEVG) shows a compositional bias: basic and acidic residues. Residues 146 to 169 (KDVGQKTKEVGQEIQTKAQDSKRT) form a disordered region.

It belongs to the oleosin family. As to expression, expressed in seeds (at protein level).

The protein localises to the lipid droplet. It localises to the membrane. Functionally, may have a structural role to stabilize the lipid body during desiccation of the seed by preventing coalescence of the oil. Probably interacts with both lipid and phospholipid moieties of lipid bodies. May also provide recognition signals for specific lipase anchorage in lipolysis during seedling growth. The polypeptide is Oleosin Ara h 10.0101 (Arachis hypogaea (Peanut)).